Here is a 424-residue protein sequence, read N- to C-terminus: Dihydroorotase (424 aa).

His58 and His60 together coordinate Zn(2+). Substrate contacts are provided by residues His60–Arg62 and Asn92. The Zn(2+) site is built by Asp150, His177, and His230. Residue Asn276 participates in substrate binding. A Zn(2+)-binding site is contributed by Asp303. Asp303 is a catalytic residue. Substrate-binding positions include His307 and Phe321–Gly322.

The protein belongs to the metallo-dependent hydrolases superfamily. DHOase family. Class I DHOase subfamily. Zn(2+) serves as cofactor.

It catalyses the reaction (S)-dihydroorotate + H2O = N-carbamoyl-L-aspartate + H(+). It participates in pyrimidine metabolism; UMP biosynthesis via de novo pathway; (S)-dihydroorotate from bicarbonate: step 3/3. Functionally, catalyzes the reversible cyclization of carbamoyl aspartate to dihydroorotate. The polypeptide is Dihydroorotase (Staphylococcus aureus (strain MRSA252)).